Reading from the N-terminus, the 371-residue chain is AA9 family lytic polysaccharide monooxygenase B (371 aa).

Residues 1-25 (MSIAKIAGVVLGSAALVAGHGYVSG) form the signal peptide. Cu(2+) is bound by residues H20 and H104. Intrachain disulfides connect C74-C194 and C115-C119. The N-linked (GlcNAc...) asparagine glycan is linked to N154. Residues H180 and Q189 each coordinate O2. A Cu(2+)-binding site is contributed by Y191. Positions 304–332 (HVQATSSSAAASTPTASSGASSGSGSSSS) are disordered. Residues 307–332 (ATSSSAAASTPTASSGASSGSGSSSS) show a composition bias toward low complexity.

The protein belongs to the polysaccharide monooxygenase AA9 family. Cu(2+) is required as a cofactor.

The protein resides in the secreted. The enzyme catalyses [(1-&gt;4)-beta-D-glucosyl]n+m + reduced acceptor + O2 = 4-dehydro-beta-D-glucosyl-[(1-&gt;4)-beta-D-glucosyl]n-1 + [(1-&gt;4)-beta-D-glucosyl]m + acceptor + H2O.. Functionally, lytic polysaccharide monooxygenase (LPMO) that depolymerizes crystalline and amorphous polysaccharides via the oxidation of scissile alpha- or beta-(1-4)-glycosidic bonds, yielding C1 and C4 oxidation products. Catalysis by LPMOs requires the reduction of the active-site copper from Cu(II) to Cu(I) by a reducing agent and H(2)O(2) or O(2) as a cosubstrate. In addition to cellulose, also cleaves the beta-(1!4)-glucan backbone of tamarind xyloglucan, irrespective of substitutions which contrasts with AA9A xyloglucan cleavage activity. This chain is AA9 family lytic polysaccharide monooxygenase B, found in Aspergillus tamarii.